Reading from the N-terminus, the 1441-residue chain is Tripeptidyl-peptidase 2 (1441 aa).

The tract at residues 62 to 89 (AESSERSNSSKKTTNKEQSDKSAESRMA) is disordered. Basic and acidic residues predominate over residues 75 to 85 (TNKEQSDKSAE). The 502-residue stretch at 107–608 (ETGVLNFLQK…HGLLNVEKAF (502 aa)) folds into the Peptidase S8 domain. Residues D131, H359, and S549 each act as charge relay system in the active site. Residues 1139–1155 (TANGAKPKAPATPQAAT) show a composition bias toward low complexity. Disordered regions lie at residues 1139–1190 (TANG…KANA) and 1255–1274 (QKTS…EDQK). S1182 is modified (phosphoserine). The segment covering 1265–1274 (SADKQKEDQK) has biased composition (basic and acidic residues).

It belongs to the peptidase S8 family. As to quaternary structure, homooligomer; forms a complex of 6 MDa probably composed of 40 subunits. Forms a structure consisting of 2 segmented and twisted strands that form a spindle-shaped structure. Each strand is composed of 10 segments (a segment being a homodimer oriented head to head), stacking of these segments leads to the formation of a twisted single strand. 2 strands compose the fully assembled spindle.

The protein localises to the cytoplasm. It catalyses the reaction Release of an N-terminal tripeptide from a polypeptide.. Its activity is regulated as follows. Inhibited by phenylmethanesulfonyl fluoride (PMSF) and butabindide, but not by peptidase inhibitor pepstatin, EDTA, nor bestatin. Component of the proteolytic cascade acting downstream of the 26S proteasome in the ubiquitin-proteasome pathway. Efficiently cleaves Ala-Ala-Ala-polypeptide and Pro-Pro-Ala-polypeptide, Val-Leu-Lys-polypeptide only at high concentration. Does not cleave Ala-Phe-Pro-polypeptide nor Pro-Leu-Gly-polypeptide. This chain is Tripeptidyl-peptidase 2 (TppII), found in Drosophila melanogaster (Fruit fly).